A 285-amino-acid chain; its full sequence is Ribosomal RNA small subunit methyltransferase A (285 aa).

Asn-30, Leu-32, Gly-57, Glu-78, Asp-101, and Asn-121 together coordinate S-adenosyl-L-methionine.

This sequence belongs to the class I-like SAM-binding methyltransferase superfamily. rRNA adenine N(6)-methyltransferase family. RsmA subfamily.

The protein localises to the cytoplasm. It catalyses the reaction adenosine(1518)/adenosine(1519) in 16S rRNA + 4 S-adenosyl-L-methionine = N(6)-dimethyladenosine(1518)/N(6)-dimethyladenosine(1519) in 16S rRNA + 4 S-adenosyl-L-homocysteine + 4 H(+). Functionally, specifically dimethylates two adjacent adenosines (A1518 and A1519) in the loop of a conserved hairpin near the 3'-end of 16S rRNA in the 30S particle. May play a critical role in biogenesis of 30S subunits. The chain is Ribosomal RNA small subunit methyltransferase A from Treponema pallidum (strain Nichols).